The primary structure comprises 83 residues: UPF0297 protein CLK_1948 (83 aa).

It belongs to the UPF0297 family.

This Clostridium botulinum (strain Loch Maree / Type A3) protein is UPF0297 protein CLK_1948.